The sequence spans 548 residues: DNA ligase (548 aa).

Position 244 (glutamate 244) interacts with ATP. The N6-AMP-lysine intermediate role is filled by lysine 246. The ATP site is built by arginine 251, arginine 266, glutamate 295, phenylalanine 334, arginine 405, and lysine 411.

The protein belongs to the ATP-dependent DNA ligase family. Mg(2+) is required as a cofactor.

The catalysed reaction is ATP + (deoxyribonucleotide)n-3'-hydroxyl + 5'-phospho-(deoxyribonucleotide)m = (deoxyribonucleotide)n+m + AMP + diphosphate.. Its function is as follows. DNA ligase that seals nicks in double-stranded DNA during DNA replication, DNA recombination and DNA repair. The protein is DNA ligase of Methanoculleus marisnigri (strain ATCC 35101 / DSM 1498 / JR1).